Here is a 618-residue protein sequence, read N- to C-terminus: Kelch-like protein 40b (618 aa).

In terms of domain architecture, BTB spans 33–100 (VDCVLKIKDK…LYTSNINVTE (68 aa)). The region spanning 135–237 (CLAIFRLGLM…PRDYFVKNVE (103 aa)) is the BACK domain. Positions 264-284 (PELKKTKNKKSPSEEGQKKGD) are enriched in basic and acidic residues. Residues 264–297 (PELKKTKNKKSPSEEGQKKGDEEEVEEEEEQEER) form a disordered region. Positions 285 to 295 (EEEVEEEEEQE) are enriched in acidic residues. Kelch repeat units follow at residues 356-408 (QIFV…EAEN), 409-458 (FIFV…SHNE), 459-506 (MIYV…IHKN), 508-553 (IYVV…SVSG), and 555-608 (LYAV…VLGV).

This sequence belongs to the KLHL40 family. In terms of assembly, component of the BCR(KLHL40) E3 ubiquitin ligase complex. Expressed in skeletal muscle. Detected in the eye at much lower levels.

It is found in the cytoplasm. It localises to the myofibril. The protein localises to the sarcomere. Its subcellular location is the a band. The protein resides in the i band. Functionally, substrate-specific adapter of a BCR (BTB-CUL3-RBX1) E3 ubiquitin ligase complex. Required for skeletal muscle development. This chain is Kelch-like protein 40b (klhl40b), found in Danio rerio (Zebrafish).